A 262-amino-acid polypeptide reads, in one-letter code: ATP synthase subunit a (262 aa).

Helical transmembrane passes span 26–46 (VHID…FVFS), 86–106 (VAPL…IDLI), 130–150 (DISA…FYTI), 204–226 (LIFI…GIPL), and 240–260 (LQAF…YNKA).

The protein belongs to the ATPase A chain family. F-type ATPases have 2 components, CF(1) - the catalytic core - and CF(0) - the membrane proton channel. CF(1) has five subunits: alpha(3), beta(3), gamma(1), delta(1), epsilon(1). CF(0) has three main subunits: a(1), b(2) and c(9-12). The alpha and beta chains form an alternating ring which encloses part of the gamma chain. CF(1) is attached to CF(0) by a central stalk formed by the gamma and epsilon chains, while a peripheral stalk is formed by the delta and b chains.

Its subcellular location is the cell inner membrane. Its function is as follows. Key component of the proton channel; it plays a direct role in the translocation of protons across the membrane. The polypeptide is ATP synthase subunit a (Haemophilus influenzae (strain 86-028NP)).